Here is a 376-residue protein sequence, read N- to C-terminus: Lipid-A-disaccharide synthase (376 aa).

Belongs to the LpxB family.

It carries out the reaction a lipid X + a UDP-2-N,3-O-bis[(3R)-3-hydroxyacyl]-alpha-D-glucosamine = a lipid A disaccharide + UDP + H(+). It participates in bacterial outer membrane biogenesis; LPS lipid A biosynthesis. Its function is as follows. Condensation of UDP-2,3-diacylglucosamine and 2,3-diacylglucosamine-1-phosphate to form lipid A disaccharide, a precursor of lipid A, a phosphorylated glycolipid that anchors the lipopolysaccharide to the outer membrane of the cell. In Coxiella burnetii (strain CbuK_Q154) (Coxiella burnetii (strain Q154)), this protein is Lipid-A-disaccharide synthase.